Consider the following 113-residue polypeptide: Dolichyl-diphosphooligosaccharide--protein glycosyltransferase subunit DAD1 (113 aa).

At Ser-2 the chain carries N-acetylserine. The Cytoplasmic segment spans residues 2–30; sequence SASVVSVISRFLEEYLSSTPQRLKLLDAY. A helical membrane pass occupies residues 31-51; sequence LLYILLTGALQFGYCLLVGTF. Position 52 (Pro-52) is a topological domain, lumenal. A helical transmembrane segment spans residues 53–73; the sequence is FNSFLSGFISCVGSFILAVCL. Residues 74–92 lie on the Cytoplasmic side of the membrane; the sequence is RIQINPQNKADFQGISPER. A helical transmembrane segment spans residues 93-113; the sequence is AFADFLFASTILHLVVMNFVG.

The protein belongs to the DAD/OST2 family. In terms of assembly, component of the oligosaccharyltransferase (OST) complex. OST exists in two different complex forms which contain common core subunits RPN1, RPN2, OST48, OST4, DAD1 and TMEM258, either STT3A or STT3B as catalytic subunits, and form-specific accessory subunits. STT3A complex assembly occurs through the formation of 3 subcomplexes. Subcomplex 1 contains RPN1 and TMEM258, subcomplex 2 contains the STT3A-specific subunits STT3A, DC2/OSTC, and KCP2 as well as the core subunit OST4, and subcomplex 3 contains RPN2, DAD1, and OST48. The STT3A complex can form stable complexes with the Sec61 complex or with both the Sec61 and TRAP complexes.

It localises to the endoplasmic reticulum membrane. It functions in the pathway protein modification; protein glycosylation. Subunit of the oligosaccharyl transferase (OST) complex that catalyzes the initial transfer of a defined glycan (Glc(3)Man(9)GlcNAc(2) in eukaryotes) from the lipid carrier dolichol-pyrophosphate to an asparagine residue within an Asn-X-Ser/Thr consensus motif in nascent polypeptide chains, the first step in protein N-glycosylation. N-glycosylation occurs cotranslationally and the complex associates with the Sec61 complex at the channel-forming translocon complex that mediates protein translocation across the endoplasmic reticulum (ER). All subunits are required for a maximal enzyme activity. The polypeptide is Dolichyl-diphosphooligosaccharide--protein glycosyltransferase subunit DAD1 (Mus musculus (Mouse)).